Here is a 169-residue protein sequence, read N- to C-terminus: Putative lipocalin R877 (169 aa).

An N-terminal signal peptide occupies residues 1–18 (MWIIILIVIIVIITIIFS).

This sequence belongs to the calycin superfamily. Lipocalin family.

Its subcellular location is the secreted. The protein resides in the virion. Functionally, could play a role in the transport of a small ligand. In Acanthamoeba polyphaga mimivirus (APMV), this protein is Putative lipocalin R877.